The sequence spans 1867 residues: TATA-binding protein-associated factor MOT1 (1867 aa).

S93 carries the post-translational modification Phosphoserine. The tract at residues 169 to 228 is disordered; it reads KTDDIKQETSMLNASDKANENKSNANKKSARMLAMARRKKKMSAKNTPKHPVDITESSVS. Low complexity predominate over residues 181-203; sequence NASDKANENKSNANKKSARMLAM. A Nuclear localization signal motif is present at residues 195–211; that stretch reads KKSARMLAMARRKKKMS. HEAT repeat units lie at residues 289-326, 445-482, and 541-578; these read WQFQ…KHAY, GLLE…EFVK, and WSFK…IKDD. The residue at position 677 (S677) is a Phosphoserine. 2 HEAT repeats span residues 1108–1145 and 1188–1225; these read SEVF…ISSV and PYVI…LVPL. A Helicase ATP-binding domain is found at 1284–1457; that stretch reads AFLNKYHLHG…WSLFDFLMPG (174 aa). 1297–1304 is a binding site for ATP; the sequence is DDMGLGKT. Positions 1408–1411 match the DEGH box motif; that stretch reads DEGH. The stretch at 1495–1537 is one HEAT 6 repeat; sequence ALHKQVLPFMLRRLKEDVLSDLPPKIIQDYYCELGDLQKQLYM. The Helicase C-terminal domain maps to 1639–1787; the sequence is PIQNVISQHR…STVVNQQNSG (149 aa). Residues 1802–1822 are disordered; it reads PDNVTSQDNEEKNNGDSQAAK.

The protein belongs to the SNF2/RAD54 helicase family. As to quaternary structure, forms a complex with TBP which binds TATA DNA with high affinity but with altered specificity.

The protein resides in the mitochondrion. Its subcellular location is the nucleus. Functionally, regulates transcription in association with TATA binding protein (TBP). Removes TBP from the TATA box via its C-terminal ATPase activity. Both transcription activation and repression require its ATPase activity. This is TATA-binding protein-associated factor MOT1 (MOT1) from Saccharomyces cerevisiae (strain ATCC 204508 / S288c) (Baker's yeast).